A 433-amino-acid polypeptide reads, in one-letter code: tRNA(Ile)-lysidine synthase (433 aa).

An ATP-binding site is contributed by 27 to 32; the sequence is SGGLDS.

The protein belongs to the tRNA(Ile)-lysidine synthase family.

Its subcellular location is the cytoplasm. It catalyses the reaction cytidine(34) in tRNA(Ile2) + L-lysine + ATP = lysidine(34) in tRNA(Ile2) + AMP + diphosphate + H(+). Functionally, ligates lysine onto the cytidine present at position 34 of the AUA codon-specific tRNA(Ile) that contains the anticodon CAU, in an ATP-dependent manner. Cytidine is converted to lysidine, thus changing the amino acid specificity of the tRNA from methionine to isoleucine. This chain is tRNA(Ile)-lysidine synthase, found in Legionella pneumophila subsp. pneumophila (strain Philadelphia 1 / ATCC 33152 / DSM 7513).